Consider the following 496-residue polypeptide: Cyclin-dependent kinase 16 (496 aa).

A disordered region spans residues 1 to 95; that stretch reads MDRMKKIKRQ…SATSSDEVQS (95 aa). At Ser12 the chain carries Phosphoserine; by BRSK2. Ser36, Ser42, Ser64, Ser65, Ser78, Ser82, and Ser89 each carry phosphoserine. The segment covering 69 to 78 has biased composition (basic and acidic residues); the sequence is IVHEDMKMGS. The segment covering 83–93 has biased composition (polar residues); that stretch reads DQASATSSDEV. Ser95 carries the post-translational modification Phosphoserine; by CDK5. Phosphoserine is present on residues Ser110, Ser119, Ser138, Ser146, Ser153, and Ser155. A Protein kinase domain is found at 165–446; sequence YIKLDKLGEG…AEDARKHPFF (282 aa). ATP-binding positions include 171-179 and Lys194; that span reads LGEGTYATV. Thr175 bears the Phosphothreonine mark. Residue Asp286 is the Proton acceptor of the active site. Thr380 carries the post-translational modification Phosphothreonine. Phosphoserine is present on residues Ser391, Ser478, and Ser480.

This sequence belongs to the protein kinase superfamily. CMGC Ser/Thr protein kinase family. CDC2/CDKX subfamily. In terms of assembly, found in a complex containing CABLES1, CDK17 and TDRD7. Interacts with BRSK2. Identified in a complex with NSF, syntaxin-1, synaptotagmin, SYN1, SYP and CDK5R1. Interacts with YWHAH, YWHAQ and YWHAZ. Interacts with CCNY; this interaction increases the CDK16 kinase activity. Interacts with CCNYL1; this interaction mutually increases the stability of CDK16 and CCNYL1 and increases the kinase activity of CDK16. Interacts with NSF. Post-translationally, phosphorylation of CDK16 is essential for the binding of CCNY, but also essential for the regulation of CDK16 kinase activity. Phosphorylation of CDK16 is essential for the binding of CCNYl1, but also essential for the regulation of CDK16 kinase activity. Ser-146 and Ser-153 are the critical sites for the binding of CCNYL1 and for modulating CDK16 kinase activity. Phosphorylation at Ser-153 inhibits kinase activity. As to expression, highly expressed in testis and brain, and detected at lower levels in heart, skeletal muscle, adipose tissue, lung, spleen and pancreas (at protein level). Ubiquitous with highest levels in testis and brain, with longer form predominant in all tissues except the testis.

It localises to the cytoplasm. It is found in the cytoplasmic vesicle. Its subcellular location is the secretory vesicle. The protein resides in the cell membrane. The protein localises to the synapse. It localises to the synaptosome. The enzyme catalyses L-seryl-[protein] + ATP = O-phospho-L-seryl-[protein] + ADP + H(+). It catalyses the reaction L-threonyl-[protein] + ATP = O-phospho-L-threonyl-[protein] + ADP + H(+). In terms of biological role, protein kinase that plays a role in vesicle-mediated transport processes and exocytosis. Can phosphorylate CCNY at 'Ser-336' (in vitro). Plays a role in the regulation of insulin secretion in response to changes in blood glucose levels. Regulates GH1 release by brain neurons. Phosphorylates NSF, and thereby regulates NSF oligomerization. Required for normal spermatogenesis. Regulates neuron differentiation and dendrite development. The sequence is that of Cyclin-dependent kinase 16 (Cdk16) from Mus musculus (Mouse).